The following is a 149-amino-acid chain: Proline-rich acidic protein 1 (149 aa).

Positions 1–20 are cleaved as a signal peptide; it reads MKRFLLATCLVAALLWEAGA. Disordered stretches follow at residues 51 to 79 and 97 to 122; these read EPLE…KRPD and LQGP…EVPQ. Residues 66-79 are compositionally biased toward basic and acidic residues; the sequence is PKQKPAAAEEKRPD.

As to quaternary structure, interacts with MTTP. Interacts with MAD1L1. As to expression, predominantly expressed in the intestinal epithelial cells than in the liver (at protein level). Abundantly expressed in the uterus during late pregnancy by uterus epithelial cells. After birth expression rapidly decreases and is no longer found in the uterus by the third day. Also highly expressed in the small intestine where it shows a proximal-distal graded expression.

It is found in the secreted. Its subcellular location is the endoplasmic reticulum. In terms of biological role, lipid-binding protein which promotes lipid absorption by facilitating MTTP-mediated lipid transfer (mainly triglycerides and phospholipids) and MTTP-mediated apoB lipoprotein assembly and secretion. Protects the gastrointestinal epithelium from irradiation-induced apoptosis. May play an important role in maintaining normal growth homeostasis in epithelial cells. Involved in p53/TP53-dependent cell survival after DNA damage. The chain is Proline-rich acidic protein 1 (Prap1) from Mus musculus (Mouse).